We begin with the raw amino-acid sequence, 238 residues long: Adenylate dimethylallyltransferase (238 aa).

It belongs to the isopentenyl transferase family.

It carries out the reaction dimethylallyl diphosphate + AMP = N(6)-(dimethylallyl)adenosine 5'-phosphate + diphosphate. Functionally, transfers dimethylallyl groups to AMP as part of the biosynthesis of cytokinin phytohormones. This is Adenylate dimethylallyltransferase (tzs) from Ralstonia solanacearum (Pseudomonas solanacearum).